A 129-amino-acid polypeptide reads, in one-letter code: Fluoride-specific ion channel FluC 1 (129 aa).

Transmembrane regions (helical) follow at residues 43–63 (ASLLLGLVAGAAGAGAPPAWV), 68–88 (VVSLVGTGLCGALSTYSTFSY), and 100–120 (LLAAANVAGSVLAAFGAAALG). Glycine 78 and serine 81 together coordinate Na(+).

It belongs to the fluoride channel Fluc/FEX (TC 1.A.43) family.

The protein localises to the cell membrane. The catalysed reaction is fluoride(in) = fluoride(out). With respect to regulation, na(+) is not transported, but it plays an essential structural role and its presence is essential for fluoride channel function. Its function is as follows. Fluoride-specific ion channel. Important for reducing fluoride concentration in the cell, thus reducing its toxicity. The sequence is that of Fluoride-specific ion channel FluC 1 from Frankia casuarinae (strain DSM 45818 / CECT 9043 / HFP020203 / CcI3).